We begin with the raw amino-acid sequence, 393 residues long: N-acyl-phosphatidylethanolamine-hydrolyzing phospholipase D (393 aa).

The residue at position 1 (methionine 1) is an N-acetylmethionine. Residues 1-16 (MDENESNQSLMTSSQY) show a composition bias toward polar residues. The disordered stretch occupies residues 1 to 40 (MDENESNQSLMTSSQYPKEAVRKRQNSARNSGASDSSRFS). The Zn(2+) site is built by histidine 185 and histidine 187. Residue tyrosine 188 participates in an N-acyl-1,2-diacyl-sn-glycero-3-phosphoethanolamine binding. 3 residues coordinate Zn(2+): aspartate 189, histidine 190, and histidine 253. 2 residues coordinate deoxycholate: lysine 256 and methionine 260. Aspartate 284 is a binding site for Zn(2+). An N-acyl-1,2-diacyl-sn-glycero-3-phosphoethanolamine is bound at residue histidine 321. Zn(2+) is bound at residue histidine 343. Alanine 348 contributes to the deoxycholate binding site.

The protein belongs to the NAPE-PLD family. Homodimer. Bile acids promote the assembly of inactive monomers into an active dimer and enable catalysis. Zn(2+) serves as cofactor. Widely expressed. Highest expression in brain, kidney and testis (at protein level). Expressed in adipose tissue (at protein level).

The protein localises to the golgi apparatus membrane. It localises to the early endosome membrane. It is found in the nucleus envelope. The protein resides in the nucleus. Its subcellular location is the nucleoplasm. The catalysed reaction is an N-acyl-1,2-diacyl-sn-glycero-3-phosphoethanolamine + H2O = an N-acylethanolamine + a 1,2-diacyl-sn-glycero-3-phosphate + H(+). It carries out the reaction N-butanoyl-1-hexadecanoyl-2-(9Z,12Z-octadecadienoyl)-sn-glycero-3-phosphoethanolamine + H2O = N-butanoyl ethanolamine + 1-hexadecanoyl-2-(9Z,12Z-octadecadienoyl)-sn-glycero-3-phosphate + H(+). The enzyme catalyses N-hexanoyl-1-hexadecanoyl-2-(9Z,12Z-octadecadienoyl)-sn-glycero-3-phosphoethanolamine + H2O = N-hexanoyl ethanolamine + 1-hexadecanoyl-2-(9Z,12Z-octadecadienoyl)-sn-glycero-3-phosphate + H(+). It catalyses the reaction N-octanoyl-1-hexadecanoyl-2-(9Z,12Z-octadecadienoyl)-sn-glycero-3-phosphoethanolamine + H2O = N-octanoyl ethanolamine + 1-hexadecanoyl-2-(9Z,12Z-octadecadienoyl)-sn-glycero-3-phosphate + H(+). The catalysed reaction is N-decanoyl-1-hexadecanoyl-2-(9Z,12Z-octadecadienoyl)-sn-glycero-3-phosphoethanolamine + H2O = N-decanoyl ethanolamine + 1-hexadecanoyl-2-(9Z,12Z-octadecadienoyl)-sn-glycero-3-phosphate + H(+). It carries out the reaction N-dodecanoyl-1,2-di-(9Z-octadecenoyl)-sn-glycero-3-phosphoethanolamine + H2O = N-dodecanoylethanolamine + 1,2-di-(9Z-octadecenoyl)-sn-glycero-3-phosphate + H(+). The enzyme catalyses N-tetradecanoyl-1,2-di-(9Z-octadecenoyl)-sn-glycero-3-phosphoethanolamine + H2O = N-tetradecanoylethanolamine + 1,2-di-(9Z-octadecenoyl)-sn-glycero-3-phosphate + H(+). It catalyses the reaction N-hexadecanoyl-1,2-di-(9Z-octadecenoyl)-sn-glycero-3-phosphoethanolamine + H2O = N-hexadecanoylethanolamine + 1,2-di-(9Z-octadecenoyl)-sn-glycero-3-phosphate + H(+). The catalysed reaction is N,1-dihexadecanoyl-2-(9Z,12Z-octadecadienoyl)-sn-glycero-3-phosphoethanolamine + H2O = 1-hexadecanoyl-2-(9Z,12Z-octadecadienoyl)-sn-glycero-3-phosphate + N-hexadecanoylethanolamine + H(+). It carries out the reaction N-octadecanoyl-1,2-di-(9Z-octadecenoyl)-sn-glycero-3-phosphoethanolamine + H2O = N-octadecanoyl ethanolamine + 1,2-di-(9Z-octadecenoyl)-sn-glycero-3-phosphate + H(+). The enzyme catalyses N,1,2-tri-(9Z-octadecenoyl)-sn-glycero-3-phosphoethanolamine + H2O = N-(9Z-octadecenoyl) ethanolamine + 1,2-di-(9Z-octadecenoyl)-sn-glycero-3-phosphate + H(+). It catalyses the reaction N-(5Z,8Z,11Z,14Z-eicosatetraenoyl)-1,2-diacyl-sn-glycero-3-phosphoethanolamine + H2O = N-(5Z,8Z,11Z,14Z-eicosatetraenoyl)-ethanolamine + a 1,2-diacyl-sn-glycero-3-phosphate + H(+). The catalysed reaction is N-(5Z,8Z,11Z,14Z-eicosatetraenoyl)-1,2-di-(9Z-octadecenoyl)-sn-glycero-3-phosphoethanolamine + H2O = N-(5Z,8Z,11Z,14Z-eicosatetraenoyl)-ethanolamine + 1,2-di-(9Z-octadecenoyl)-sn-glycero-3-phosphate + H(+). It carries out the reaction 1-O-(1Z-octadecenoyl)-2-(9Z-octadecenoyl)-sn-glycero-3-phospho-N-hexadecanoyl-ethanolamine + H2O = 1-O-(1Z-octadecenoyl)-2-(9Z-octadecenoyl)-sn-glycero-3-phosphate + N-hexadecanoylethanolamine + H(+). The enzyme catalyses N,1-diacyl-sn-glycero-3-phosphoethanolamine + H2O = an N-acylethanolamine + a 1-acyl-sn-glycero-3-phosphate + H(+). It catalyses the reaction N,1-dihexadecanoyl-sn-glycero-3-phosphoethanolamine + H2O = N-hexadecanoylethanolamine + 1-hexadecanoyl-sn-glycero-3-phosphate + H(+). The catalysed reaction is N-(5Z,8Z,11Z,14Z-eicosatetraenoyl)-1-(9Z-octadecenoyl)-sn-glycero-3-phosphoethanolamine + H2O = N-(5Z,8Z,11Z,14Z-eicosatetraenoyl)-ethanolamine + 1-(9Z-octadecenoyl)-sn-glycero-3-phosphate + H(+). With respect to regulation, activated by divalent cations. Activated by bile acids and their conjugates, except for lithocholic acid which is rather inhibitory. Binding of deoxycholic acid favors the selective release of anandamide and likely other unsatured long FAEs. Inhibited by phosphatidylethanolamines. Its function is as follows. D-type phospholipase that hydrolyzes N-acyl-phosphatidylethanolamines (NAPEs) to produce bioactive N-acylethanolamines/fatty acid ethanolamides (NAEs/FAEs) and phosphatidic acid. Cleaves the terminal phosphodiester bond of diacyl- and alkenylacyl-NAPEs, primarily playing a role in the generation of long-chain saturated and monounsaturated NAEs in the brain. May control NAPE homeostasis in dopaminergic neuron membranes and regulate neuron survival, partly through RAC1 activation. As a regulator of lipid metabolism in the adipose tissue, mediates the crosstalk between adipocytes, gut microbiota and immune cells to control body temperature and weight. In particular, regulates energy homeostasis by promoting cold-induced brown or beige adipocyte differentiation program to generate heat from fatty acids and glucose. Has limited D-type phospholipase activity toward N-acyl lyso-NAPEs. This Homo sapiens (Human) protein is N-acyl-phosphatidylethanolamine-hydrolyzing phospholipase D (NAPEPLD).